A 242-amino-acid chain; its full sequence is 3-dehydroquinate dehydratase (242 aa).

3-dehydroquinate contacts are provided by residues 39–41 and R73; that span reads EIR. The Proton donor/acceptor role is filled by H135. K162 serves as the catalytic Schiff-base intermediate with substrate. 2 residues coordinate 3-dehydroquinate: R203 and Q228.

It belongs to the type-I 3-dehydroquinase family. As to quaternary structure, homodimer.

The enzyme catalyses 3-dehydroquinate = 3-dehydroshikimate + H2O. It participates in metabolic intermediate biosynthesis; chorismate biosynthesis; chorismate from D-erythrose 4-phosphate and phosphoenolpyruvate: step 3/7. Involved in the third step of the chorismate pathway, which leads to the biosynthesis of aromatic amino acids. Catalyzes the cis-dehydration of 3-dehydroquinate (DHQ) and introduces the first double bond of the aromatic ring to yield 3-dehydroshikimate. The chain is 3-dehydroquinate dehydratase from Methanosarcina barkeri (strain Fusaro / DSM 804).